We begin with the raw amino-acid sequence, 174 residues long: Acetolactate synthase small subunit (174 aa).

Positions Thr4 to Asn78 constitute an ACT domain.

This sequence belongs to the acetolactate synthase small subunit family. In terms of assembly, dimer of large and small chains.

The protein resides in the plastid. It is found in the chloroplast. The enzyme catalyses 2 pyruvate + H(+) = (2S)-2-acetolactate + CO2. It participates in amino-acid biosynthesis; L-isoleucine biosynthesis; L-isoleucine from 2-oxobutanoate: step 1/4. The protein operates within amino-acid biosynthesis; L-valine biosynthesis; L-valine from pyruvate: step 1/4. In Porphyra purpurea (Red seaweed), this protein is Acetolactate synthase small subunit (ilvH).